The chain runs to 63 residues: U-reduvitoxin-Pr9a (63 aa).

An N-terminal signal peptide occupies residues 1 to 19 (MRFFSLFTFLVAFIAAALA). The propeptide occupies 20–42 (APVEIGEDLFALRPTGAKRDIIL). Cysteines 47 and 60 form a disulfide.

Expressed by the venom gland.

Its subcellular location is the secreted. In Platymeris rhadamanthus (Red spot assassin bug), this protein is U-reduvitoxin-Pr9a.